Consider the following 100-residue polypeptide: Succinate dehydrogenase assembly factor 4, mitochondrial (100 aa).

A mitochondrion-targeting transit peptide spans 1–31 (MFNRNLRAVILKNYNKALTRCLHDAGNLKRP). The interval 24–100 (DAGNLKRPTP…YSYEGRVTDF (77 aa)) is disordered. Composition is skewed to basic and acidic residues over residues 36-68 (LPKEQQEEWDRLQKESSKRPVDVMRREKHKDFE) and 85-100 (PTVHGDYSYEGRVTDF).

The protein belongs to the SDHAF4 family. In terms of assembly, interacts with sdh1 in its FAD-bound form.

The protein resides in the mitochondrion matrix. In terms of biological role, plays an essential role in the assembly of succinate dehydrogenase (SDH), an enzyme complex (also referred to as respiratory complex II) that is a component of both the tricarboxylic acid (TCA) cycle and the mitochondrial electron transport chain, and which couples the oxidation of succinate to fumarate with the reduction of ubiquinone (coenzyme Q) to ubiquinol. Binds to the flavoprotein subunit sdh1 in its FAD-bound form, blocking the generation of excess reactive oxygen species (ROS) and facilitating its assembly with the iron-sulfur protein subunit sdh2 into the SDH catalytic dimer. This Schizosaccharomyces pombe (strain 972 / ATCC 24843) (Fission yeast) protein is Succinate dehydrogenase assembly factor 4, mitochondrial.